Here is a 150-residue protein sequence, read N- to C-terminus: Leukotriene C4 synthase (150 aa).

Residues 1 to 6 lie on the Cytoplasmic side of the membrane; the sequence is MKDEVA. The chain crosses the membrane as a helical span at residues 7–27; the sequence is LLASVTLLGVLLQAYFSLQVI. The Lumenal segment spans residues 28-48; sequence SARRAFRVSPPLTTGPPEFER. Arg30 is a binding site for glutathione. Arg31 acts as the Proton donor in catalysis. Ser36 carries the post-translational modification Phosphoserine. Residues 49–69 form a helical membrane-spanning segment; it reads IYRAQVNCSEYFPLFLAMLWV. Glutathione contacts are provided by residues 51 to 55 and 58 to 59; these read RAQVN and EY. Topologically, residues 70-73 are cytoplasmic; sequence AGIF. A helical transmembrane segment spans residues 74–94; it reads FHEGAAALCGLVYLFARLRYF. 93 to 97 provides a ligand contact to glutathione; that stretch reads YFQGY. Over 95–104 the chain is Lumenal; sequence QGYARSAQQR. Arg104 (proton acceptor) is an active-site residue. The helical transmembrane segment at 105 to 124 threads the bilayer; it reads LAPLYASARALWLLVALAAL. Residues 125-150 are Cytoplasmic-facing; it reads GLLAHFLPAELRAALLGQLRKLLLRS.

The protein belongs to the MAPEG family. Homotrimer. Interacts with ALOX5AP and ALOX5. In terms of processing, phosphorylation at Ser-36 by RPS6KB1 inhibits the leukotriene-C4 synthase activity.

Its subcellular location is the nucleus outer membrane. It localises to the endoplasmic reticulum membrane. The protein resides in the nucleus membrane. It carries out the reaction leukotriene C4 = leukotriene A4 + glutathione. It catalyses the reaction (13S,14S)-epoxy-(4Z,7Z,9E,11E,16Z,19Z)-docosahexaenoate + glutathione = (13R)-S-glutathionyl-(14S)-hydroxy-(4Z,7Z,9E,11E,16Z,19Z)-docosahexaenoate. Its pathway is lipid metabolism; leukotriene C4 biosynthesis. Its activity is regulated as follows. Inhibited by MK886. Functionally, catalyzes the conjugation of leukotriene A4 with reduced glutathione (GSH) to form leukotriene C4 with high specificity. Can also catalyze the transfer of a glutathionyl group from glutathione (GSH) to 13(S),14(S)-epoxy-docosahexaenoic acid to form maresin conjugate in tissue regeneration 1 (MCTR1), a bioactive lipid mediator that possess potent anti-inflammatory and proresolving actions. The polypeptide is Leukotriene C4 synthase (LTC4S) (Bos taurus (Bovine)).